The primary structure comprises 108 residues: Nucleoid-associated protein Rmet_2128 (108 aa).

A compositionally biased stretch (polar residues) spans 86-96 (TTQEKMGSMTS). The segment at 86-108 (TTQEKMGSMTSGLPLPPGFKLPF) is disordered. Residues 99–108 (PLPPGFKLPF) show a composition bias toward pro residues.

The protein belongs to the YbaB/EbfC family. In terms of assembly, homodimer.

It localises to the cytoplasm. The protein localises to the nucleoid. Binds to DNA and alters its conformation. May be involved in regulation of gene expression, nucleoid organization and DNA protection. The chain is Nucleoid-associated protein Rmet_2128 from Cupriavidus metallidurans (strain ATCC 43123 / DSM 2839 / NBRC 102507 / CH34) (Ralstonia metallidurans).